The sequence spans 224 residues: Germin-like protein 8-10 (224 aa).

The first 22 residues, 1–22 (MASPSICLLAALLALVSWQAIA), serve as a signal peptide directing secretion. Residues C32 and C47 are joined by a disulfide bond. Positions 62–212 (AMLDTPRKTN…AFQVEKGTID (151 aa)) constitute a Cupin type-1 domain. N-linked (GlcNAc...) asparagine glycosylation is present at N76. Mn(2+) is bound by residues H109, H111, and E116. A glycan (N-linked (GlcNAc...) asparagine) is linked at N135. H157 serves as a coordination point for Mn(2+).

This sequence belongs to the germin family. Oligomer (believed to be a pentamer but probably hexamer).

The protein localises to the secreted. Its subcellular location is the extracellular space. The protein resides in the apoplast. Functionally, plays a role in broad-spectrum disease resistance. Probably has no oxalate oxidase activity even if the active site is conserved. The polypeptide is Germin-like protein 8-10 (GLP2) (Oryza sativa subsp. japonica (Rice)).